Here is a 1030-residue protein sequence, read N- to C-terminus: E3 ubiquitin-protein ligase mib1 (1030 aa).

Residues 6–74 (NNRVMMEGVG…AYDVRILDSA (69 aa)) form the MIB/HERC2 1 domain. The ZZ-type zinc-finger motif lies at 80–132 (HDGTMCDTCRQQPIIGIRWKCAECTNYDLCTTCYHGDKHHLRHRFYRITTPGS). Positions 85, 88, 100, 103, 109, 112, 118, and 122 each coordinate Zn(2+). The MIB/HERC2 2 domain maps to 143–221 (SKKITARGIF…MSDLKCVQDA (79 aa)). ANK repeat units lie at residues 430–460 (DINE…DVNG), 463–492 (AGHT…DLEA), 496–525 (DGDR…DLNA), 529–558 (RRQT…HPSL), 562–591 (EGDT…DVTI), 595–627 (NGFN…IVDE), 631–661 (DGYT…NLDV), 665–694 (NQQT…KLDV), and 698–727 (DGDT…VSKV). 2 consecutive RING-type zinc fingers follow at residues 817–852 (CMVC…LICK) and 864–899 (CVVC…VQCR). The stretch at 957–986 (ALQRDKDNTNVNADVQKLQQQLQDIKEQTM) forms a coiled coil. Residues 987-1020 (CPVCLDRLKNMIFMCGHGTCQLCGDRMSECPICR) form an RING-type 3 zinc finger.

In terms of assembly, interacts with deltaA (dla) and deltaD (dld).

It is found in the cytoplasm. The protein resides in the cytoskeleton. Its subcellular location is the microtubule organizing center. The protein localises to the centrosome. It localises to the centriolar satellite. It is found in the cell membrane. It carries out the reaction S-ubiquitinyl-[E2 ubiquitin-conjugating enzyme]-L-cysteine + [acceptor protein]-L-lysine = [E2 ubiquitin-conjugating enzyme]-L-cysteine + N(6)-ubiquitinyl-[acceptor protein]-L-lysine.. Its pathway is protein modification; protein ubiquitination. In terms of biological role, E3 ubiquitin-protein ligase that mediates ubiquitination of Delta receptors, which act as ligands of Notch proteins. Positively regulates the Delta-mediated Notch signaling by ubiquitinating the intracellular domain of Delta, leading to endocytosis of Delta receptors. It thereby participates in many processes regulated by the Notch signaling pathway, such as midline cell fate specification prior to germ layer formation, patterning of sensory cell differentiation in the ear, neurogenesis of the hindbrain and commitment to a secretory fate in the intestine. Essential for early embryonic development. This chain is E3 ubiquitin-protein ligase mib1 (mib1), found in Danio rerio (Zebrafish).